Reading from the N-terminus, the 122-residue chain is Large ribosomal subunit protein uL14 (122 aa).

The protein belongs to the universal ribosomal protein uL14 family. As to quaternary structure, part of the 50S ribosomal subunit. Forms a cluster with proteins L3 and L19. In the 70S ribosome, L14 and L19 interact and together make contacts with the 16S rRNA in bridges B5 and B8.

Its function is as follows. Binds to 23S rRNA. Forms part of two intersubunit bridges in the 70S ribosome. This chain is Large ribosomal subunit protein uL14, found in Exiguobacterium sibiricum (strain DSM 17290 / CCUG 55495 / CIP 109462 / JCM 13490 / 255-15).